The following is a 110-amino-acid chain: MKLKKKFLEKSKKIAEERIDVLMNLAEKESKDGKADRSKNYVLLGKKIAMRMRMPYPKEWKRRICKNCGSFLIYGKNARVRTKAKNYPHVVITCLECNSITRIPIKTEKK.

Zn(2+) is bound by residues Cys-65, Cys-68, Cys-94, and Cys-97.

This sequence belongs to the eukaryotic/archaeal RNase P protein component 4 family. Consists of a catalytic RNA component and at least 4-5 protein subunits. Zn(2+) is required as a cofactor.

The protein localises to the cytoplasm. The catalysed reaction is Endonucleolytic cleavage of RNA, removing 5'-extranucleotides from tRNA precursor.. In terms of biological role, part of ribonuclease P, a protein complex that generates mature tRNA molecules by cleaving their 5'-ends. The chain is Ribonuclease P protein component 4 from Methanococcus maripaludis (strain C6 / ATCC BAA-1332).